Here is a 252-residue protein sequence, read N- to C-terminus: Hydroxyacylglutathione hydrolase (252 aa).

Residues H54, H56, D58, H59, H113, D132, and H170 each coordinate Zn(2+).

It belongs to the metallo-beta-lactamase superfamily. Glyoxalase II family. In terms of assembly, monomer. Zn(2+) is required as a cofactor.

The catalysed reaction is an S-(2-hydroxyacyl)glutathione + H2O = a 2-hydroxy carboxylate + glutathione + H(+). It participates in secondary metabolite metabolism; methylglyoxal degradation; (R)-lactate from methylglyoxal: step 2/2. Thiolesterase that catalyzes the hydrolysis of S-D-lactoyl-glutathione to form glutathione and D-lactic acid. The protein is Hydroxyacylglutathione hydrolase of Gloeobacter violaceus (strain ATCC 29082 / PCC 7421).